The following is a 295-amino-acid chain: Oxidoreductase AN1597 (295 aa).

It belongs to the asaB hydroxylase/desaturase family.

It functions in the pathway secondary metabolite biosynthesis; terpenoid biosynthesis. Oxidoreductase; part of the gene cluster that mediates the biosynthesis of the diterpene ent-pimara-8(14),15-diene (PD). Within the cluster, the HMG-CoA reductase AN1593 functions in the mevalonate pathway, which produces isoprenoid precursors. The geranylgeranyl pyrophosphate (GGPP) synthase AN1592 is needed in the formation of GGPP, the precursor for diterpenes. Lastly, the pimaradiene synthase pbcA performs the 2 cyclization steps that convert GGPP to ent-pimara-8(14),15-diene. The putative roles of the remaining cluster enzymes in ent-pimara-8(14),15-diene biosynthesis is unclear. The cytochrome P450 monooxygenase AN1598, the glutathione S-transferase AN1595, the oxidoreductases AN1596 and AN1597 probably function as decorative enzymes. It is possible that in biological conditions the compound is oxidized to ent-pimara-8(14),15-dien-19-oic acid, which is a bioactive diterpene compound predominant in many plant extracts. This is Oxidoreductase AN1597 from Emericella nidulans (strain FGSC A4 / ATCC 38163 / CBS 112.46 / NRRL 194 / M139) (Aspergillus nidulans).